Here is a 209-residue protein sequence, read N- to C-terminus: Orotate phosphoribosyltransferase (209 aa).

Residues Arg98, Lys102, His104, and 124 to 132 contribute to the 5-phospho-alpha-D-ribose 1-diphosphate site; that span reads EDLISTGKS. Ser128 is a binding site for orotate.

It belongs to the purine/pyrimidine phosphoribosyltransferase family. PyrE subfamily. As to quaternary structure, homodimer. It depends on Mg(2+) as a cofactor.

It catalyses the reaction orotidine 5'-phosphate + diphosphate = orotate + 5-phospho-alpha-D-ribose 1-diphosphate. The protein operates within pyrimidine metabolism; UMP biosynthesis via de novo pathway; UMP from orotate: step 1/2. Catalyzes the transfer of a ribosyl phosphate group from 5-phosphoribose 1-diphosphate to orotate, leading to the formation of orotidine monophosphate (OMP). This Malacoplasma penetrans (strain HF-2) (Mycoplasma penetrans) protein is Orotate phosphoribosyltransferase.